A 310-amino-acid chain; its full sequence is Very-long-chain enoyl-CoA reductase (310 aa).

Residues 1–85 (MPITIKSRSK…KDLGPQISWR (85 aa)) are Cytoplasmic-facing. Residues 86–106 (LVFFCEYLGPVLVHSLFYYLS) traverse the membrane as a helical segment. The Lumenal portion of the chain corresponds to 107–141 (TIPTVVDRWHSASSDYNPFLNRVAYFLILGHYGKR). Residues 142–162 (LFETLFVHQFSLATMPIFNLF) form a helical membrane-spanning segment. Residues 163 to 165 (KNC) are Cytoplasmic-facing. A helical transmembrane segment spans residues 166-186 (FHYWVLSGLISFGYFGYGFPF). Residues 187-201 (GNAKLFKYYSYLKLD) lie on the Lumenal side of the membrane. Residues 202 to 222 (DLSTLIGLFVLSELWNFYCHI) traverse the membrane as a helical segment. Residues 223 to 242 (KLRLWGDYQKKHGNAKIRVP) are Cytoplasmic-facing. A helical transmembrane segment spans residues 243–265 (LNQGIFNLFVAPNYTFEVWSWIW). Topologically, residues 266–268 (FTF) are lumenal. Residues 269 to 291 (VFKFNLFAVLFLTVSTAQMYAWA) traverse the membrane as a helical segment. Residues 292–310 (QKKNKKYHTRRAFLIPFVF) are Cytoplasmic-facing.

This sequence belongs to the steroid 5-alpha reductase family. In terms of assembly, interacts with the fatty acid elongation system components ELO2 and ELO3. Interacts with NVJ1.

The protein localises to the endoplasmic reticulum membrane. The catalysed reaction is a very-long-chain 2,3-saturated fatty acyl-CoA + NADP(+) = a very-long-chain (2E)-enoyl-CoA + NADPH + H(+). It catalyses the reaction octadecanoyl-CoA + NADP(+) = (2E)-octadecenoyl-CoA + NADPH + H(+). The enzyme catalyses (2E)-eicosenoyl-CoA + NADPH + H(+) = eicosanoyl-CoA + NADP(+). It carries out the reaction (2E)-docosenoyl-CoA + NADPH + H(+) = docosanoyl-CoA + NADP(+). The catalysed reaction is (2E)-tetracosenoyl-CoA + NADPH + H(+) = tetracosanoyl-CoA + NADP(+). It catalyses the reaction (2E)-hexacosenoyl-CoA + NADPH + H(+) = hexacosanoyl-CoA + NADP(+). The protein operates within lipid metabolism; fatty acid biosynthesis. Functionally, catalyzes the last of the four reactions of the long-chain fatty acids elongation cycle. This endoplasmic reticulum-bound enzymatic process, allows the addition of 2 carbons to the chain of long- and very long-chain fatty acids/VLCFAs per cycle. This enzyme reduces the trans-2,3-enoyl-CoA fatty acid intermediate to an acyl-CoA that can be further elongated by entering a new cycle of elongation. Thereby, it participates in the production of VLCFAs of different chain lengths that are involved in multiple biological processes as precursors of membrane lipids and lipid mediators. VLCFAs serve for instance as precursors for ceramide and sphingolipids. Required for normal biogenesis of piecemeal microautophagy of the nucleus (PMN) bleps and vesicles during nutrient stress. This chain is Very-long-chain enoyl-CoA reductase (TSC13), found in Saccharomyces cerevisiae (strain ATCC 204508 / S288c) (Baker's yeast).